Here is a 315-residue protein sequence, read N- to C-terminus: NAD(P)H-dependent anabolic L-arginine dehydrogenase DauB (315 aa).

This sequence belongs to the ornithine cyclodeaminase/mu-crystallin family.

The catalysed reaction is L-arginine + NAD(+) + H2O = 5-guanidino-2-oxopentanoate + NH4(+) + NADH + H(+). It catalyses the reaction L-arginine + NADP(+) + H2O = 5-guanidino-2-oxopentanoate + NH4(+) + NADPH + H(+). Involved in the anabolism of D-lysine and D-arginine. Under aerobic conditions, the arginine succinyltransferase (AST) and arginine transaminase (ATA) pathways are 2 major routes for L-arginine utilization as the sole source of carbon and nitrogen. The D-to-L racemization of arginine by DauA and DauB is necessary, before to be channeled into the AST and/or ATA pathways. DauB catalyzes the synthesis of L-arginine from 2-ketoarginine (2-KA) and ammonium. The chain is NAD(P)H-dependent anabolic L-arginine dehydrogenase DauB from Pseudomonas aeruginosa (strain ATCC 15692 / DSM 22644 / CIP 104116 / JCM 14847 / LMG 12228 / 1C / PRS 101 / PAO1).